A 156-amino-acid polypeptide reads, in one-letter code: Small ribosomal subunit protein uS7 (156 aa).

This sequence belongs to the universal ribosomal protein uS7 family. In terms of assembly, part of the 30S ribosomal subunit. Contacts proteins S9 and S11.

Its function is as follows. One of the primary rRNA binding proteins, it binds directly to 16S rRNA where it nucleates assembly of the head domain of the 30S subunit. Is located at the subunit interface close to the decoding center, probably blocks exit of the E-site tRNA. The polypeptide is Small ribosomal subunit protein uS7 (Pelobacter propionicus (strain DSM 2379 / NBRC 103807 / OttBd1)).